Here is a 712-residue protein sequence, read N- to C-terminus: Polyribonucleotide nucleotidyltransferase (712 aa).

Positions 485 and 491 each coordinate Mg(2+). The KH domain occupies 552 to 615 (PRIHTIKINP…EAIRRIEAIT (64 aa)). Positions 621–689 (NRIYEGKVVR…RQGRVRLSIK (69 aa)) constitute an S1 motif domain.

Belongs to the polyribonucleotide nucleotidyltransferase family. Component of the RNA degradosome, which is a multiprotein complex involved in RNA processing and mRNA degradation. Mg(2+) is required as a cofactor.

The protein localises to the cytoplasm. It catalyses the reaction RNA(n+1) + phosphate = RNA(n) + a ribonucleoside 5'-diphosphate. In terms of biological role, involved in mRNA degradation. Catalyzes the phosphorolysis of single-stranded polyribonucleotides processively in the 3'- to 5'-direction. The polypeptide is Polyribonucleotide nucleotidyltransferase (Aeromonas hydrophila subsp. hydrophila (strain ATCC 7966 / DSM 30187 / BCRC 13018 / CCUG 14551 / JCM 1027 / KCTC 2358 / NCIMB 9240 / NCTC 8049)).